Consider the following 505-residue polypeptide: Keratin, type II cuticular Hb1 (505 aa).

The interval 1–106 is head; it reads MTCGSGFGGR…PNAQCVKQEE (106 aa). Residues 106–417 form the IF rod domain; it reads EKEQIKSLNS…RLLEGEEQRL (312 aa). The interval 107–141 is coil 1A; sequence KEQIKSLNSRFAAFIDKVRFLEQQNKLLETKLQFY. The tract at residues 142-151 is linker 1; the sequence is QNRECCQSNL. The segment at 152 to 252 is coil 1B; sequence EPLFEGYIET…YEEEILILQS (101 aa). A Glycyl lysine isopeptide (Lys-Gly) (interchain with G-Cter in SUMO1) cross-link involves residue Lys212. A linker 12 region spans residues 253-269; sequence HISDTSVVVKLDNSRDL. The interval 270-413 is coil 2; it reads NMDCIIAEIK…ATYRRLLEGE (144 aa). The segment at 414–505 is tail; it reads EQRLCEGIGA…GSCGSSCRKC (92 aa).

It belongs to the intermediate filament family. In terms of assembly, heterotetramer of two type I and two type II keratins. Abundantly expressed in the differentiating cortex of growing (anagen) hair. Expression is restricted to the keratinocytes of the hair cortex and is absent from inner root sheath and medulla. Expressed in malignant lymph node tissue in breast carcinoma tissue.

The chain is Keratin, type II cuticular Hb1 (KRT81) from Homo sapiens (Human).